The primary structure comprises 62 residues: DNA-directed RNA polymerase subunit Rpo10 (62 aa).

Zn(2+) is bound by residues C6, C9, C43, and C44.

Belongs to the archaeal Rpo10/eukaryotic RPB10 RNA polymerase subunit family. Part of the RNA polymerase complex. Zn(2+) is required as a cofactor.

The protein resides in the cytoplasm. It carries out the reaction RNA(n) + a ribonucleoside 5'-triphosphate = RNA(n+1) + diphosphate. In terms of biological role, DNA-dependent RNA polymerase (RNAP) catalyzes the transcription of DNA into RNA using the four ribonucleoside triphosphates as substrates. This chain is DNA-directed RNA polymerase subunit Rpo10, found in Methanoregula boonei (strain DSM 21154 / JCM 14090 / 6A8).